The sequence spans 353 residues: Fasciculation and elongation protein zeta-2 (353 aa).

Residues 19–49 (SLLDQENCNASPEPGAEAGAEAGGGADGFPA) are disordered. Low complexity predominate over residues 28–38 (ASPEPGAEAGA). Residues Ser-135, Ser-176, and Ser-195 each carry the phosphoserine modification. Residues 214–286 (KRLSVSELNE…AKKKKKLKNG (73 aa)) adopt a coiled-coil conformation. A disordered region spans residues 271–300 (KEHKETAKKKKKLKNGSSQNGKNERSHMPG).

This sequence belongs to the zygin family. In terms of assembly, homodimer; disulfide-linked. May form heterodimers with FEZ1. Interacts with synaptotagmin. In terms of tissue distribution, expressed in nonneural tissues, such as heart, lung, spleen, muscle, testis, placenta and melanocytes.

In terms of biological role, involved in axonal outgrowth and fasciculation. This Homo sapiens (Human) protein is Fasciculation and elongation protein zeta-2 (FEZ2).